The primary structure comprises 198 residues: MIITTVYFILVAIAVLALIFGAILGFASVKLKVEADPIVEKIDALLPQSQCGQCGYPGCKPYAEAIANGDDITKCIPGGQTVIVNIAELMGVEPPTTDIEGDPAPMVAFIDEDMCIGCTKCIQACPVDAIIGTNKAMHTIIPDLCTGCELCVPPCPTDCISMIKVESTIHNWNWKFDPKLVIPIVDTTTTQKKLIKGE.

The tract at residues 1–28 (MIITTVYFILVAIAVLALIFGAILGFAS) is hydrophobic. In terms of domain architecture, 4Fe-4S spans 34–92 (EADPIVEKIDALLPQSQCGQCGYPGCKPYAEAIANGDDITKCIPGGQTVIVNIAELMGV). The [4Fe-4S] cluster site is built by Cys-51, Cys-54, Cys-59, Cys-75, Cys-115, Cys-118, Cys-121, Cys-125, Cys-145, Cys-148, Cys-151, and Cys-155. 4Fe-4S ferredoxin-type domains lie at 106–135 (MVAF…GTNK) and 136–165 (AMHT…MIKV).

This sequence belongs to the 4Fe4S bacterial-type ferredoxin family. RnfB subfamily. The complex is composed of six subunits: RnfA, RnfB, RnfC, RnfD, RnfE and RnfG. [4Fe-4S] cluster serves as cofactor.

It is found in the cell inner membrane. Its function is as follows. Part of a membrane-bound complex that couples electron transfer with translocation of ions across the membrane. In Pasteurella multocida (strain Pm70), this protein is Ion-translocating oxidoreductase complex subunit B.